We begin with the raw amino-acid sequence, 430 residues long: Adenylosuccinate synthetase (430 aa).

GTP contacts are provided by residues 12–18 (GDEGKGK) and 40–42 (GHT). Catalysis depends on aspartate 13, which acts as the Proton acceptor. 2 residues coordinate Mg(2+): aspartate 13 and glycine 40. IMP is bound by residues 13-16 (DEGK), 38-41 (NAGH), threonine 128, arginine 142, glutamine 223, threonine 238, and arginine 302. Catalysis depends on histidine 41, which acts as the Proton donor. 298–304 (TTTGRPR) provides a ligand contact to substrate. Residues arginine 304, 330–332 (SID), and 412–414 (SVG) contribute to the GTP site.

It belongs to the adenylosuccinate synthetase family. Homodimer. Requires Mg(2+) as cofactor.

It localises to the cytoplasm. The catalysed reaction is IMP + L-aspartate + GTP = N(6)-(1,2-dicarboxyethyl)-AMP + GDP + phosphate + 2 H(+). Its pathway is purine metabolism; AMP biosynthesis via de novo pathway; AMP from IMP: step 1/2. Plays an important role in the de novo pathway of purine nucleotide biosynthesis. Catalyzes the first committed step in the biosynthesis of AMP from IMP. The protein is Adenylosuccinate synthetase of Streptococcus pyogenes serotype M6 (strain ATCC BAA-946 / MGAS10394).